The following is a 159-amino-acid chain: Large ribosomal subunit protein uL22 (159 aa).

Belongs to the universal ribosomal protein uL22 family. In terms of assembly, part of the 50S ribosomal subunit.

Functionally, this protein binds specifically to 23S rRNA. It makes multiple contacts with different domains of the 23S rRNA in the assembled 50S subunit and ribosome. Its function is as follows. The globular domain of the protein is located near the polypeptide exit tunnel on the outside of the subunit, while an extended beta-hairpin is found that lines the wall of the exit tunnel in the center of the 70S ribosome. The sequence is that of Large ribosomal subunit protein uL22 from Methanopyrus kandleri (strain AV19 / DSM 6324 / JCM 9639 / NBRC 100938).